The following is a 634-amino-acid chain: Kelch-like protein 22 (634 aa).

Alanine 2 carries the post-translational modification N-acetylalanine. Residues 50–117 (FDVVLVVEGR…IYTSELELSL (68 aa)) enclose the BTB domain. 6 Kelch repeats span residues 299–349 (CVVG…VLNN), 350–399 (FVYL…VVGR), 400–446 (YIYA…TLEG), 448–493 (MYIT…TLLN), 494–544 (KLYV…VLDN), and 545–593 (RIYV…VLTL). Threonine 463 is modified (phosphothreonine). Tyrosine 466 bears the Phosphotyrosine mark. Threonine 475 is subject to Phosphothreonine. Residues 600 to 634 (EPPRGTPDRSQADPDFASEVMSVSDWEEFDNSSED) are disordered. Threonine 605 carries the post-translational modification Phosphothreonine. Residues 624 to 634 (DWEEFDNSSED) are compositionally biased toward acidic residues.

As to quaternary structure, component of the BCR(KLHL22) E3 ubiquitin ligase complex, at least composed of CUL3, KLHL22 and RBX1. Interacts with PLK1. Interacts with DEPDC5 (via DEP domain); the interaction depends on amino acid availability. Interacts with YWHAE; required for the nuclear localization of KLHL22 upon amino acid starvation.

The protein localises to the cytoplasm. It is found in the cytosol. Its subcellular location is the cytoskeleton. It localises to the microtubule organizing center. The protein resides in the centrosome. The protein localises to the spindle. It is found in the nucleus. Its subcellular location is the lysosome. The protein operates within protein modification; protein ubiquitination. Its function is as follows. Substrate-specific adapter of a BCR (BTB-CUL3-RBX1) E3 ubiquitin ligase complex required for chromosome alignment and localization of PLK1 at kinetochores. The BCR(KLHL22) ubiquitin ligase complex mediates monoubiquitination of PLK1, leading to PLK1 dissociation from phosphoreceptor proteins and subsequent removal from kinetochores, allowing silencing of the spindle assembly checkpoint (SAC) and chromosome segregation. Monoubiquitination of PLK1 does not lead to PLK1 degradation. The BCR(KLHL22) ubiquitin ligase complex is also responsible for the amino acid-stimulated 'Lys-48' polyubiquitination and proteasomal degradation of DEPDC5. Through the degradation of DEPDC5, releases the GATOR1 complex-mediated inhibition of the TORC1 pathway. It is therefore an amino acid-dependent activator within the amino acid-sensing branch of the TORC1 pathway, indirectly regulating different cellular processes including cell growth and autophagy. The protein is Kelch-like protein 22 of Homo sapiens (Human).